Here is a 426-residue protein sequence, read N- to C-terminus: Glutamate-1-semialdehyde 2,1-aminomutase (426 aa).

K268 is subject to N6-(pyridoxal phosphate)lysine.

The protein belongs to the class-III pyridoxal-phosphate-dependent aminotransferase family. HemL subfamily. It depends on pyridoxal 5'-phosphate as a cofactor.

The protein localises to the cytoplasm. The enzyme catalyses (S)-4-amino-5-oxopentanoate = 5-aminolevulinate. Its pathway is porphyrin-containing compound metabolism; protoporphyrin-IX biosynthesis; 5-aminolevulinate from L-glutamyl-tRNA(Glu): step 2/2. The sequence is that of Glutamate-1-semialdehyde 2,1-aminomutase from Saccharolobus islandicus (strain M.16.27) (Sulfolobus islandicus).